Reading from the N-terminus, the 428-residue chain is Probable protein phosphatase 2C 5 (428 aa).

Residues 25 to 297 (RSEKVEKPFV…DDTTCVVVDI (273 aa)) enclose the PPM-type phosphatase domain. Mn(2+) is bound by residues D73, G74, D249, and D288.

Belongs to the PP2C family. Mg(2+) serves as cofactor. Requires Mn(2+) as cofactor.

The enzyme catalyses O-phospho-L-seryl-[protein] + H2O = L-seryl-[protein] + phosphate. It catalyses the reaction O-phospho-L-threonyl-[protein] + H2O = L-threonyl-[protein] + phosphate. The protein is Probable protein phosphatase 2C 5 of Arabidopsis thaliana (Mouse-ear cress).